The chain runs to 123 residues: Basic phospholipase A2 Ph-TX1 (123 aa).

Residues Tyr-27, Gly-29, and Gly-31 each contribute to the Ca(2+) site. Disulfide bonds link Cys-28-Cys-45, Cys-44-Cys-96, Cys-50-Cys-123, Cys-51-Cys-89, Cys-59-Cys-83, and Cys-77-Cys-87. The active site involves His-48. Asp-49 is a binding site for Ca(2+). Asp-90 is a catalytic residue.

The protein belongs to the phospholipase A2 family. Group II subfamily. D49 sub-subfamily. As to quaternary structure, monomer. Requires Ca(2+) as cofactor. In terms of tissue distribution, expressed by the venom gland.

Its subcellular location is the secreted. The catalysed reaction is a 1,2-diacyl-sn-glycero-3-phosphocholine + H2O = a 1-acyl-sn-glycero-3-phosphocholine + a fatty acid + H(+). With respect to regulation, inhibited by divalent cations different from calcium ions (cadmium, magnesium, manganese, zinc), since they act as competitive antagonists of this cofactor. Snake venom phospholipase A2 (PLA2) that induces in vivo myotoxicity, moderates footpad edema, and causes in vitro neuromuscular blockade. PLA2 catalyzes the calcium-dependent hydrolysis of the 2-acyl groups in 3-sn-phosphoglycerides. The polypeptide is Basic phospholipase A2 Ph-TX1 (Bothrocophias hyoprora (Amazonian hognose viper)).